Here is a 506-residue protein sequence, read N- to C-terminus: MANNAAACAERATNDMLIGPDWAINIELCDIINMEPSQAKEAVKVLKKRLGSKNSKVQILALYALETLSKNCGESVYQLIVDRDILPDMVKIVKKKPDLTVREKILSLLDTWQEAFGGSGGRFPQYYNAYNELRSAGIEFPPRTESSVPFFTPPQTQPIVAQATASDEDAAIQASLQSDDASALSMEEIQSAQGSVDVLTDMLGALDPSHPEGLKEELIVDLVEQCRTYQRRVMALVNTTSDEELMCQGLALNDNLQRVLQHHDDKAKGNSVPATAPTPIPLVSINHDDDDDESDDDFLQLAHRSKRESARGTGQGNFNPILPPPPSSMRPVHVDSGAMDFLSGDVYKPQETFENVKPPSTSQSSNHDYSAPIFDEPVPQSKSPEHALFTKPVYDQTEQLPPAPWETQEPRKYPPSMSARTNKRPEYFQHNVPQHSSSASESSYDDLLGQSRNLSLNPTASAAPVTPPKKDDKPEDILFKDLMDFAKTRTSSSSSSKPNNQNNKPF.

In terms of domain architecture, VHS spans 12 to 141; sequence ATNDMLIGPD…ELRSAGIEFP (130 aa). The GAT domain occupies 180–268; it reads DASALSMEEI…VLQHHDDKAK (89 aa). 3 disordered regions span residues 266-328, 351-384, and 398-477; these read KAKG…PPSS, ETFE…SKSP, and EQLP…PEDI. A compositionally biased stretch (acidic residues) spans 288–298; sequence DDDDDESDDDF. The residue at position 294 (Ser294) is a Phosphoserine. Residues 358–368 are compositionally biased toward polar residues; the sequence is PPSTSQSSNHD. Residue Ser383 is modified to Phosphoserine. Polar residues predominate over residues 450 to 460; sequence QSRNLSLNPTA. Over residues 468-477 the composition is skewed to basic and acidic residues; it reads PKKDDKPEDI.

The protein belongs to the TOM1 family. Preferentially expressed in cauline leaves.

Its subcellular location is the membrane. Might contribute to the loading of the ESCRT machinery. In Arabidopsis thaliana (Mouse-ear cress), this protein is TOM1-like protein 3.